The primary structure comprises 464 residues: Isthmin-1 (464 aa).

Positions 1–29 (MVRLAAELLLLLGLLLLTLHITVLRGSGA) are cleaved as a signal peptide. N-linked (GlcNAc...) asparagine glycosylation is present at N39. Disordered regions lie at residues 50–98 (NVGS…LQRD), 135–155 (PDSEADKDQHPENKPSWSVPS), and 173–219 (SGDQ…STDG). A compositionally biased stretch (polar residues) spans 51 to 63 (VGSDTTSETSFSL). Basic and acidic residues-rich tracts occupy residues 66–76 (EAPREHLDHQA) and 138–147 (EADKDQHPEN). In terms of domain architecture, TSP type-1 spans 218 to 262 (DGEGDWSLWSVCSVTCGNGNQKRTRSCGYACTATESRTCDRPNCP). Cystine bridges form between C229–C256, C233–C261, and C244–C248. Residues 289–452 (LFEVDTDSCE…QKCTESPSDE (164 aa)) enclose the AMOP domain.

This sequence belongs to the isthmin family. As to quaternary structure, interacts with integrin ITGAV/ITGB5.

Its subcellular location is the secreted. Functionally, acts as an angiogenesis inhibitor. This is Isthmin-1 (ISM1) from Homo sapiens (Human).